The following is a 563-amino-acid chain: Ribulokinase (563 aa).

Belongs to the ribulokinase family.

It catalyses the reaction D-ribulose + ATP = D-ribulose 5-phosphate + ADP + H(+). It carries out the reaction L-ribulose + ATP = L-ribulose 5-phosphate + ADP + H(+). The protein operates within carbohydrate degradation; L-arabinose degradation via L-ribulose; D-xylulose 5-phosphate from L-arabinose (bacterial route): step 2/3. In Mycolicibacterium smegmatis (Mycobacterium smegmatis), this protein is Ribulokinase.